The following is a 630-amino-acid chain: Sodium-dependent serotonin transporter (630 aa).

Composition is skewed to polar residues over residues 1 to 11 and 42 to 55; these read METTPLNSQKV and QISN…STSA. The disordered stretch occupies residues 1-63; the sequence is METTPLNSQK…SAGDEAPHST (63 aa). The Cytoplasmic segment spans residues 1 to 87; it reads METTPLNSQK…ERETWGKKMD (87 aa). Position 47 is a phosphotyrosine (Tyr-47). A helical transmembrane segment spans residues 88–112; that stretch reads FLLSVIGYAVDLGNIWRFPYICYQN. Residues Gly-94, Ala-96, Val-97, Asp-98, and Asn-101 each coordinate Na(+). Asp-98 serves as a coordination point for serotonin. Residues 113–115 lie on the Extracellular side of the membrane; the sequence is GGG. A helical transmembrane segment spans residues 116 to 135; it reads AFLLPYTIMAIFGGIPLFYM. At 136 to 160 the chain is on the cytoplasmic side; it reads ELALGQYHRNGCISIWKKICPIFKG. Tyr-142 carries the post-translational modification Phosphotyrosine. The helical transmembrane segment at 161 to 186 threads the bilayer; sequence IGYAICIIAFYIASYYNTIIAWALYY. The Extracellular portion of the chain corresponds to 187 to 252; that stretch reads LISSFTDQLP…KGLQDLGTIS (66 aa). Cys-200 and Cys-209 are oxidised to a cystine. Residues Asn-208 and Asn-217 are each glycosylated (N-linked (GlcNAc...) asparagine). Residues 253–271 form a helical membrane-spanning segment; that stretch reads WQLALCIMLIFTIIYFSIW. The Cytoplasmic portion of the chain corresponds to 272–277; sequence KGVKTS. The residue at position 276 (Thr-276) is a Phosphothreonine. Residues 278 to 297 traverse the membrane as a helical segment; the sequence is GKVVWVTATFPYIVLSVLLV. Over 298–324 the chain is Extracellular; the sequence is RGATLPGAWRGVVFYLKPNWQKLLETG. A helical transmembrane segment spans residues 325–347; the sequence is VWVDAAAQIFFSLGPGFGVLLAF. Residue Ser-336 participates in Na(+) binding. The Cytoplasmic segment spans residues 348 to 360; sequence ASYNKFNNNCYQD. Residues 361-380 form a helical membrane-spanning segment; that stretch reads ALVTSVVNCMTSFVSGFVIF. Asn-368 serves as a coordination point for Na(+). At 381–421 the chain is on the extracellular side; it reads TVLGYMAEMRNEDVSEVAKDAGPSLLFITYAEAIANMPAST. Residues 422-443 traverse the membrane as a helical segment; it reads FFAIIFFLMLITLGLDSTFAGL. The Na(+) site is built by Leu-434, Asp-437, and Ser-438. Thr-439 is a binding site for serotonin. At 444–463 the chain is on the cytoplasmic side; the sequence is EGVITAVLDEFPHIWAKRRE. Residues 464–483 form a helical membrane-spanning segment; the sequence is WFVLIVVITCILGSLLTLTS. Over 484 to 494 the chain is Extracellular; sequence GGAYVVTLLEE. The serotonin site is built by Glu-494 and Tyr-495. A helical transmembrane segment spans residues 495 to 516; it reads YATGPAVLTVALIEAVVVSWFY. The Cytoplasmic portion of the chain corresponds to 517 to 538; the sequence is GITQFCSDVKEMLGFSPGWFWR. A helical transmembrane segment spans residues 539-558; the sequence is ICWVAISPLFLLFIICSFLM. Serotonin-binding residues include Phe-556 and Ser-559. The Extracellular portion of the chain corresponds to 559-574; the sequence is SPPQLRLFQYNYPHWS. The helical transmembrane segment at 575–595 threads the bilayer; it reads IILGYCIGTSSVICIPIYIIY. At 596–630 the chain is on the cytoplasmic side; the sequence is RLISTPGTLKERIIKSITPETPTEIPCGDIRMNAV. The segment at 616–624 is interaction with RAB4A; sequence TPTEIPCGD.

It belongs to the sodium:neurotransmitter symporter (SNF) (TC 2.A.22) family. SLC6A4 subfamily. As to quaternary structure, monomer or homooligomer. Interacts (via C-terminus) with SCAMP2; the interaction is direct and retains transporter molecules intracellularly. Interacts with filamentous actin and STX1A. Interacts (via the N-terminus) with STX1A (via the H3 domain); this interaction regulates SLC4A6 channel conductance. Interacts with SEC23A, SEC24C and PATJ. Interacts with NOS1; the interaction may diminish the cell surface localization of SERT in the brain and, correspondingly, reduce serotonin reuptake. Interacts with TGFB1I1. Interacts with ITGAV:ITGB3. Interacts (via C-terminus) with ITGB3; this interaction regulates SLC6A4 trafficking. Post-translationally, phosphorylation at Thr-276 increases 5-HT uptake and is required for cGMP-mediated SERT regulation. Expressed in the lung, midbrain and brainstem regions. Expressed in brainstem raphe neurons.

It localises to the cell membrane. Its subcellular location is the endomembrane system. The protein resides in the endosome membrane. The protein localises to the synapse. It is found in the cell junction. It localises to the focal adhesion. Its subcellular location is the cell projection. The protein resides in the neuron projection. The enzyme catalyses serotonin(out) + K(+)(in) + Na(+)(out) + H(+)(in) = serotonin(in) + K(+)(out) + Na(+)(in) + H(+)(out). Its function is as follows. Serotonin transporter that cotransports serotonin with one Na(+) ion in exchange for one K(+) ion and possibly one proton in an overall electroneutral transport cycle. Transports serotonin across the plasma membrane from the extracellular compartment to the cytosol thus limiting serotonin intercellular signaling. Essential for serotonin homeostasis in the central nervous system. In the developing somatosensory cortex, acts in glutamatergic neurons to control serotonin uptake and its trophic functions accounting for proper spatial organization of cortical neurons and elaboration of sensory circuits. In the mature cortex, acts primarily in brainstem raphe neurons to mediate serotonin uptake from the synaptic cleft back into the pre-synaptic terminal thus terminating serotonin signaling at the synapse. Modulates mucosal serotonin levels in the gastrointestinal tract through uptake and clearance of serotonin in enterocytes. Required for enteric neurogenesis and gastrointestinal reflexes. Regulates blood serotonin levels by ensuring rapid high affinity uptake of serotonin from plasma to platelets, where it is further stored in dense granules via vesicular monoamine transporters and then released upon stimulation. Mechanistically, the transport cycle starts with an outward-open conformation having Na1(+) and Cl(-) sites occupied. The binding of a second extracellular Na2(+) ion and serotonin substrate leads to structural changes to outward-occluded to inward-occluded to inward-open, where the Na2(+) ion and serotonin are released into the cytosol. Binding of intracellular K(+) ion induces conformational transitions to inward-occluded to outward-open and completes the cycle by releasing K(+) possibly together with a proton bound to Asp-98 into the extracellular compartment. Na1(+) and Cl(-) ions remain bound throughout the transport cycle. Additionally, displays serotonin-induced channel-like conductance for monovalent cations, mainly Na(+) ions. The channel activity is uncoupled from the transport cycle and may contribute to the membrane resting potential or excitability. The chain is Sodium-dependent serotonin transporter from Mus musculus (Mouse).